An 86-amino-acid polypeptide reads, in one-letter code: Small ribosomal subunit protein bS18c (86 aa).

It belongs to the bacterial ribosomal protein bS18 family. Part of the 30S ribosomal subunit.

Its subcellular location is the plastid. It localises to the chloroplast. The chain is Small ribosomal subunit protein bS18c from Larix laricina (Tamarack).